We begin with the raw amino-acid sequence, 458 residues long: MKRDFNEFKEFIKGKNVAVVGIGVSNIPLIKFLVKLGAKVTAFDMKSAEELGEISKEFEILGVNLELGKGYLDRLTGFEVVFKTPSMRIDSEALLRCKKQGAYITSEMEEFVRYCKGRVYGVTGSDGKTTTTTIVSKLLSQEGYKTWTGGNIGTPLFSNIEEIKEEDKVVLELSSFQLMTMDVEIDVAIVTNITPNHLDMHKDMQEYIDAKKNVFKYQRENDLLVINDENEITKNLDKEAKGKVVRFSSKKTEGEDAYYKDGKLYVHGKEVCKKDNIIIKGMHNVENYLAAFLAVYDEVSIESMKKVAETFGGVHHRCEFIREVDGVKYYNDSIASTPTRTLAGLKAFEKPVILLAGGYDKHVPFEPLAYEGYEKIKAIVLFGVTKEKIKAAFKRLEEEKGIHVPVYSGESLEEVVNIAKSIAESGDIITLSPACASFDMFKNFEVRGDKFKEIVNNI.

124-130 (GSDGKTT) is an ATP binding site.

It belongs to the MurCDEF family.

Its subcellular location is the cytoplasm. The enzyme catalyses UDP-N-acetyl-alpha-D-muramoyl-L-alanine + D-glutamate + ATP = UDP-N-acetyl-alpha-D-muramoyl-L-alanyl-D-glutamate + ADP + phosphate + H(+). It functions in the pathway cell wall biogenesis; peptidoglycan biosynthesis. In terms of biological role, cell wall formation. Catalyzes the addition of glutamate to the nucleotide precursor UDP-N-acetylmuramoyl-L-alanine (UMA). The chain is UDP-N-acetylmuramoylalanine--D-glutamate ligase from Clostridium perfringens (strain 13 / Type A).